Consider the following 59-residue polypeptide: Protein ORF5a (59 aa).

A helical; Signal-anchor for type III membrane protein membrane pass occupies residues 13 to 33; that stretch reads VIYDCIAILALGCAITCLLLI.

It is found in the membrane. This Equine arteritis virus (strain Bucyrus) (EAV) protein is Protein ORF5a (GP5).